Consider the following 176-residue polypeptide: MFHVSFRYIFGIPPLILVLLPVASSDCDISGKDGGAYQNVLMVNIDDLDNMINFDSNCLNNEPNFFKKHSCDDNKEASFLNRASRKLRQFLKMNISDDFKLHLSTVSQGTLTLLNCTSKGKGRKPPSLSEAQPTKNLEENKSSKEQKKQNDLCFLKILLQKIKTCWNKILRGIKEH.

Residues 1–25 (MFHVSFRYIFGIPPLILVLLPVASS) form the signal peptide. 3 disulfides stabilise this stretch: cysteine 27–cysteine 165, cysteine 58–cysteine 153, and cysteine 71–cysteine 116. Residues asparagine 94, asparagine 115, and asparagine 140 are each glycosylated (N-linked (GlcNAc...) asparagine). A disordered region spans residues 118–143 (SKGKGRKPPSLSEAQPTKNLEENKSS).

This sequence belongs to the IL-7/IL-9 family. In terms of assembly, interacts with IL7R and CSF2RG.

The protein resides in the secreted. Hematopoietic cytokine that plays an essential role in the development, expansion, and survival of naive and memory T-cells and B-cells thereby regulating the number of mature lymphocytes and maintaining lymphoid homeostasis. Mechanistically, exerts its biological effects through a receptor composed of IL7RA subunit and the cytokine receptor common subunit gamma/CSF2RG. Binding to the receptor leads to activation of various kinases including JAK1 or JAK3 depending on the cell type and subsequently propagation of signals through activation of several downstream signaling pathways including the PI3K/Akt/mTOR or the JAK-STAT5. In Bos taurus (Bovine), this protein is Interleukin-7 (IL7).